The chain runs to 74 residues: Translation initiation factor IF-1 (74 aa).

Residues 1-72 (MADTEKLKML…TRGRITYRHR (72 aa)) enclose the S1-like domain.

This sequence belongs to the IF-1 family. In terms of assembly, component of the 30S ribosomal translation pre-initiation complex which assembles on the 30S ribosome in the order IF-2 and IF-3, IF-1 and N-formylmethionyl-tRNA(fMet); mRNA recruitment can occur at any time during PIC assembly.

It localises to the cytoplasm. One of the essential components for the initiation of protein synthesis. Stabilizes the binding of IF-2 and IF-3 on the 30S subunit to which N-formylmethionyl-tRNA(fMet) subsequently binds. Helps modulate mRNA selection, yielding the 30S pre-initiation complex (PIC). Upon addition of the 50S ribosomal subunit IF-1, IF-2 and IF-3 are released leaving the mature 70S translation initiation complex. In Ureaplasma parvum serovar 3 (strain ATCC 700970), this protein is Translation initiation factor IF-1.